Here is a 238-residue protein sequence, read N- to C-terminus: Small ribosomal subunit protein uS2 (238 aa).

The protein belongs to the universal ribosomal protein uS2 family.

This is Small ribosomal subunit protein uS2 from Haemophilus ducreyi (strain 35000HP / ATCC 700724).